Here is a 392-residue protein sequence, read N- to C-terminus: Putative non-inhibitory serpin-10 (392 aa).

The RCL stretch occupies residues 333-357 (GTTAVEATYSCCSPTYSGPESPKPR).

This sequence belongs to the serpin family.

The sequence is that of Putative non-inhibitory serpin-10 from Oryza sativa subsp. japonica (Rice).